The primary structure comprises 502 residues: Lipoprotein LipO (502 aa).

The first 21 residues, 1–21, serve as a signal peptide directing secretion; it reads MKIRMRKKWMALPLAAMMIAG. Cys22 carries N-palmitoyl cysteine lipidation. The S-diacylglycerol cysteine moiety is linked to residue Cys22.

Its subcellular location is the cell membrane. The sequence is that of Lipoprotein LipO (lipO) from Bacillus subtilis (strain 168).